The primary structure comprises 145 residues: Plastocyanin, chloroplastic (145 aa).

Residues 1–48 constitute a chloroplast transit peptide; it reads MASLMRKAAVAPAKATRTTVKASASLQRVAQAAGVAVAGFSLALSANA. One can recognise a Plastocyanin-like domain in the interval 49 to 145; it reads ANVKLGADSG…AGMVGKVIVQ (97 aa). Cu cation contacts are provided by histidine 85, cysteine 130, histidine 133, and methionine 138.

This sequence belongs to the plastocyanin family. Cu(2+) is required as a cofactor.

The protein localises to the plastid. Its subcellular location is the chloroplast thylakoid membrane. In terms of biological role, participates in electron transfer between P700 and the cytochrome b6-f complex in photosystem I. In Tetradesmus obliquus (Green alga), this protein is Plastocyanin, chloroplastic (PETE).